The primary structure comprises 549 residues: Chaperonin GroEL 1 (549 aa).

ATP-binding positions include 30–33 (TLGP), lysine 51, 87–91 (DGTTT), glycine 415, 479–481 (NAA), and aspartate 495.

It belongs to the chaperonin (HSP60) family. As to quaternary structure, forms a cylinder of 14 subunits composed of two heptameric rings stacked back-to-back. Interacts with the co-chaperonin GroES.

It is found in the cytoplasm. The catalysed reaction is ATP + H2O + a folded polypeptide = ADP + phosphate + an unfolded polypeptide.. Together with its co-chaperonin GroES, plays an essential role in assisting protein folding. The GroEL-GroES system forms a nano-cage that allows encapsulation of the non-native substrate proteins and provides a physical environment optimized to promote and accelerate protein folding. The polypeptide is Chaperonin GroEL 1 (Azoarcus sp. (strain BH72)).